A 68-amino-acid chain; its full sequence is Neuronal regeneration-related protein (68 aa).

Residues 42-68 are disordered; the sequence is EETGAASLTPPGSREFTSPATSYLHPF.

In terms of assembly, interacts with FLNA. Interacts with the latency-associated peptides (LAP) of TGFB1 and TGFB2; the interaction results in a decrease in TGFB autoinduction. Phosphorylated on Ser-59. Phosphorylation decreases stability and activity. As to expression, expressed in brain and fetal lung.

The protein localises to the cytoplasm. May have roles in cellular differentiation. Ectopic expression induces differentiation of fibroblast into myofibroblast and myofibroblast ameboid migration. Increases retinoic-acid regulation of lipid-droplet biogenesis. May also have neural functions. Promotes axonal regeneration and augments motility of gliomas. Down-regulates the expression of TGFB1 and TGFB2 but not of TGFB3. May play a role in the regulation of alveolar generation. This chain is Neuronal regeneration-related protein (Nrep), found in Mus musculus (Mouse).